We begin with the raw amino-acid sequence, 690 residues long: UvrABC system protein C (690 aa).

The segment at 1 to 60 (MTTDSSDPAKPAGPGQPPGSGADTRPGGLATGQDVDPATIETDEDDEARLPDVPDEPTDA) is disordered. Over residues 41-58 (ETDEDDEARLPDVPDEPT) the composition is skewed to acidic residues. The region spanning 82–160 (TSPGVYRMMN…IKQLRPRFNV (79 aa)) is the GIY-YIG domain. A UVR domain is found at 270-305 (RAVKEELAREMEKASGDLAFERAALYRDRLAALSAI).

It belongs to the UvrC family. Interacts with UvrB in an incision complex.

Its subcellular location is the cytoplasm. In terms of biological role, the UvrABC repair system catalyzes the recognition and processing of DNA lesions. UvrC both incises the 5' and 3' sides of the lesion. The N-terminal half is responsible for the 3' incision and the C-terminal half is responsible for the 5' incision. This is UvrABC system protein C from Nitrobacter hamburgensis (strain DSM 10229 / NCIMB 13809 / X14).